The primary structure comprises 447 residues: Glyceraldehyde-3-phosphate dehydrogenase GAPB, chloroplastic (447 aa).

The N-terminal 80 residues, 1 to 80 (MATHAALAVS…STPVRGETVA (80 aa)), are a transit peptide targeting the chloroplast. Residues 91-92 (RI), aspartate 115, and arginine 160 contribute to the NADP(+) site. D-glyceraldehyde 3-phosphate-binding positions include 234 to 236 (SCT), threonine 265, arginine 280, 293 to 294 (TG), and arginine 316. The active-site Nucleophile is cysteine 235. Asparagine 399 is an NADP(+) binding site.

This sequence belongs to the glyceraldehyde-3-phosphate dehydrogenase family. In terms of assembly, tetramer of either four A chains (GAPDH 2) or two A and two B chains (GAPDH 1). Expressed in leaves and stems.

The protein resides in the plastid. It is found in the chloroplast membrane. The protein localises to the chloroplast stroma. The enzyme catalyses D-glyceraldehyde 3-phosphate + phosphate + NADP(+) = (2R)-3-phospho-glyceroyl phosphate + NADPH + H(+). The protein operates within carbohydrate biosynthesis; Calvin cycle. Its function is as follows. Involved in the photosynthetic reductive pentose phosphate pathway (Calvin-Benson cycle). Catalyzes the reduction of 1,3-diphosphoglycerate by NADPH. This chain is Glyceraldehyde-3-phosphate dehydrogenase GAPB, chloroplastic (GAPB), found in Arabidopsis thaliana (Mouse-ear cress).